Consider the following 341-residue polypeptide: D-aspartate oxidase (341 aa).

8 residues coordinate FAD: Asp36, Lys37, Thr43, Ser44, Met50, Gly307, Ile311, and Ser312. Positions 339–341 (SNL) match the Microbody targeting signal motif.

This sequence belongs to the DAMOX/DASOX family. In terms of assembly, monomer. Interacts with PEX5; the interaction is direct and required for localization of DDO to the peroxisome. Interacts with DAOA; the interaction is direct and increases the degradation rate of DDO. The cofactor is FAD. Post-translationally, may be S-nitrosylated. In terms of tissue distribution, expressed in epithelial cells of the proximal nephron tubules in the renal cortex (at protein level). In the brain, expressed in the frontal, temporal, and occipital lobes of the cortex, hippocampus, striatum, diencephalon, brainstem, cerebellum, spinal cord, plexus choroiderus and ependyma (at protein level). Expression is increased in the prefrontal cortex of schizophrenic patients. Levels are normal in the superior frontal gyrus of patients with Alzheimer's disease.

It localises to the peroxisome matrix. The protein resides in the cytoplasm. It is found in the cytosol. The catalysed reaction is D-aspartate + O2 + H2O = oxaloacetate + H2O2 + NH4(+). It catalyses the reaction D-glutamate + O2 + H2O = H2O2 + 2-oxoglutarate + NH4(+). With respect to regulation, inhibited by the benzodiazepine olanzapine. Inhibited by aminooxyacetic acid, thiolactomycin, malonate and meso-tartrate. Clozapine, haloperidol and chlorpromazine have no effect on activity. Not inhibited by sodium, potassium, magnesium, iron, calcium, cobalt, copper, nickel, manganese or zinc ions. Not inhibited by AMP, ADP, ATP, or cAMP. Not inhibited by pyridoxal 5'-phosphate. Functionally, selectively catalyzes the oxidative deamination of acidic amino acids. Suppresses the level of D-aspartate in the brain, an amino acid that can act as an agonist for glutamate receptors. Protects the organism from the toxicity of D-amino acids. May also function in the intestine. In Homo sapiens (Human), this protein is D-aspartate oxidase (DDO).